We begin with the raw amino-acid sequence, 92 residues long: NELL2-interacting cell ontogeny regulator 1 (92 aa).

Positions 1 to 30 are cleaved as a signal peptide; it reads MALPSAWSVMRVVIPFISVLGLLGVRLVGA.

This sequence belongs to the NICOL family.

It localises to the secreted. The protein resides in the cytoplasm. It is found in the perinuclear region. Functionally, mRNA-binding protein which interacts with a range of target mRNAs and may promote extracellular matrix production. May function as a component of lumicrine signaling and may play a crucial role in epididymal-mediated sperm maturation and male fertility. This is NELL2-interacting cell ontogeny regulator 1 from Gallus gallus (Chicken).